Reading from the N-terminus, the 745-residue chain is Phosphate transporter PHO1 homolog 4 (745 aa).

The SPX domain maps to 1–290; that stretch reads MRFGKEFVSQ…KRNAAKLYME (290 aa). Over 1-342 the chain is Cytoplasmic; sequence MRFGKEFVSQ…KINKERHLIT (342 aa). Residues 343 to 363 form a helical membrane-spanning segment; sequence FSTGFFFGCGISLIVALGLII. The Extracellular segment spans residues 364-383; sequence HARNIMGTPGQRTYMETMFP. Residues 384 to 404 form a helical membrane-spanning segment; sequence LYRFFGFVVLHMDVYAANIYF. At 405–427 the chain is on the cytoplasmic side; sequence WRRYRVNYSFIFGFKQGTELGYR. A helical transmembrane segment spans residues 428–448; it reads HVLLLSFGLGTLSLCAVLLNL. The Extracellular segment spans residues 449–464; sequence DMEMDAQTKDYRLVTE. A helical transmembrane segment spans residues 465-485; that stretch reads LIPLFLLVLVIIIVLCPFNIL. Residues 486–615 are Cytoplasmic-facing; it reads YRSSRFFFLS…YTLNRGSNWN (130 aa). Residues 550 to 744 form the EXS domain; the sequence is TSNIGFRTFY…NYEEDGDHHN (195 aa). Residues 616-636 form a helical membrane-spanning segment; sequence ITAWVFSGVATFYGTYWDIVL. At 637 to 660 the chain is on the extracellular side; the sequence is DWGLLQRGCKNSFLRDKLLVPHKT. Residues 661-681 form a helical membrane-spanning segment; sequence VYYAAMVLNVLLRLVWLQTVL. The Cytoplasmic segment spans residues 682–745; sequence DLKFSFLHRE…YEEDGDHHNN (64 aa).

Belongs to the SYG1 (TC 2.A.94) family. Expressed in root epidermis and cortex, leaf hydathodes, pollen grains and stigma apex.

It localises to the cell membrane. In terms of biological role, may transport inorganic phosphate (Pi). The polypeptide is Phosphate transporter PHO1 homolog 4 (PHO1-H4) (Arabidopsis thaliana (Mouse-ear cress)).